The following is a 317-amino-acid chain: tRNA dimethylallyltransferase (317 aa).

16-23 (GPTASGKS) contributes to the ATP binding site. 18-23 (TASGKS) contributes to the substrate binding site. Interaction with substrate tRNA stretches follow at residues 41–44 (DSAQ), 165–169 (QRIQR), and 247–252 (RCVGYR).

It belongs to the IPP transferase family. Monomer. It depends on Mg(2+) as a cofactor.

It catalyses the reaction adenosine(37) in tRNA + dimethylallyl diphosphate = N(6)-dimethylallyladenosine(37) in tRNA + diphosphate. Functionally, catalyzes the transfer of a dimethylallyl group onto the adenine at position 37 in tRNAs that read codons beginning with uridine, leading to the formation of N6-(dimethylallyl)adenosine (i(6)A). The sequence is that of tRNA dimethylallyltransferase from Nitrosomonas eutropha (strain DSM 101675 / C91 / Nm57).